The chain runs to 202 residues: Precorrin-2 dehydrogenase (202 aa).

NAD(+) contacts are provided by residues 20–21 and 41–42; these read TI and PT.

Belongs to the precorrin-2 dehydrogenase / sirohydrochlorin ferrochelatase family. In terms of assembly, homodimer.

It catalyses the reaction precorrin-2 + NAD(+) = sirohydrochlorin + NADH + 2 H(+). Its pathway is cofactor biosynthesis; adenosylcobalamin biosynthesis; sirohydrochlorin from precorrin-2: step 1/1. It participates in porphyrin-containing compound metabolism; siroheme biosynthesis; sirohydrochlorin from precorrin-2: step 1/1. Catalyzes the dehydrogenation of precorrin-2 to form sirohydrochlorin which is used as a precursor in both siroheme biosynthesis and in the anaerobic branch of adenosylcobalamin biosynthesis. It is unable to oxidize precorrin-3. This chain is Precorrin-2 dehydrogenase (sirC), found in Priestia megaterium (Bacillus megaterium).